A 1061-amino-acid chain; its full sequence is DNA primase TraC (1061 aa).

Positions 850-938 (PALVIGEGYA…GKAIFPIFAP (89 aa)) constitute a Toprim domain. The tract at residues 1034–1061 (EGQRQKVQQLKQQDIEQQEQRQRRARTY) is disordered.

Its function is as follows. Required for autonomous replication in E.coli. Transferred into the recipient cell during bacterial conjugation. Catalyzes the synthesis of short oligoribonucleotide primers with CpA or pCpA at their 5'-termini on a single-stranded template DNA. In Escherichia coli, this protein is DNA primase TraC (traC).